Reading from the N-terminus, the 888-residue chain is uncharacterized protein (888 aa).

Residues 1-20 (MKILKSLVLLVLFIVMPAKA) form the signal peptide. 6 helical membrane-spanning segments follow: residues 513–533 (IVKAALTLYVIIFGLMFVAGA), 565–585 (TYFFSVFTDGINFFITNVVGA), 611–631 (LLFIELLQIHNGLAFIAIITI), 649–669 (VIAFIGITVMISLAPFFIILM), 682–702 (ISTLLSYVVQPTILLIFFLLI), and 781–801 (LLFYSYCLMSYGLVTFVNIVV).

Belongs to the TrbL/VirB6 family.

It is found in the cell membrane. This is an uncharacterized protein from Rickettsia prowazekii (strain Madrid E).